Consider the following 527-residue polypeptide: Coiled-coil domain-containing protein 148 (527 aa).

Coiled coils occupy residues 289-353 (LAKD…TEIK) and 401-438 (LEKR…VAVQ).

The chain is Coiled-coil domain-containing protein 148 (Ccdc148) from Mus musculus (Mouse).